Reading from the N-terminus, the 350-residue chain is Guanine nucleotide-binding protein G(t) subunit alpha (350 aa).

Residues 1 to 21 (MGAGASAEEKHSRELEKKLKE) are disordered. A lipid anchor (N-myristoyl glycine) is attached at Gly2. Over residues 7–21 (AEEKHSRELEKKLKE) the composition is skewed to basic and acidic residues. Residues 28–350 (RTVKLLLLGA…KENLKDCGLF (323 aa)) form the G-alpha domain. The segment at 31-44 (KLLLLGAGESGKST) is G1 motif. GTP-binding positions include 36–43 (GAGESGKS), 171–177 (LRSRVKT), 196–200 (DVGGQ), 265–268 (NKKD), and Ala322. Residues Ser43 and Thr177 each coordinate Mg(2+). Residues 169-177 (DVLRSRVKT) are G2 motif. The G3 motif stretch occupies residues 192 to 201 (FRMFDVGGQR). Positions 261-268 (VLFLNKKD) are G4 motif. The tract at residues 320-325 (TCATDT) is G5 motif.

Belongs to the G-alpha family. G(i/o/t/z) subfamily. G proteins are composed of 3 units; alpha, beta and gamma. The alpha chain contains the guanine nucleotide binding site.

Guanine nucleotide-binding proteins (G proteins) are involved as modulators or transducers in various transmembrane signaling systems. Transducin is an amplifier and one of the transducers of a visual impulse that performs the coupling between rhodopsin and cGMP-phosphodiesterase. This Xenopus laevis (African clawed frog) protein is Guanine nucleotide-binding protein G(t) subunit alpha (gnat).